The primary structure comprises 233 residues: Tapetum-specific methyltransferase 1 (233 aa).

Position 8 (Lys-8) interacts with substrate. S-adenosyl-L-methionine contacts are provided by residues Val-52, Glu-74, 76–77 (GV), Ser-82, Asp-100, and Ala-129. Asp-150 contacts substrate. Asp-150 is a binding site for a divalent metal cation. Asp-152 lines the S-adenosyl-L-methionine pocket. Residues Asp-176 and Asn-177 each coordinate a divalent metal cation.

It belongs to the class I-like SAM-binding methyltransferase superfamily. Cation-dependent O-methyltransferase family. CCoAMT subfamily. Requires a divalent metal cation as cofactor. As to expression, expressed in inflorescences and flower buds. Not detected in roots, leaves or stems. Located exclusively in the tapetum of developing stamen.

It participates in aromatic compound metabolism; phenylpropanoid biosynthesis. Functionally, methyltransferase involved in phenylpropanoid polyamine conjugate biosynthesis. In vivo, methylates only one of the 5-hydroxyferuloyl moieties of N1,N5,N10-tri-(hydroxyferuloyl)-spermidine, while is able in vitro to convert all three 5-hydroxyferuloyl residues to the corresponding sinapoyl moieties and to methylate caffeoyl CoA and tricaffeoyl spermidine. The protein is Tapetum-specific methyltransferase 1 (TSM1) of Arabidopsis thaliana (Mouse-ear cress).